The chain runs to 74 residues: Sodium channel neurotoxin MeuNaTxalpha-11 (74 aa).

A signal peptide spans 1–7 (LMTGVES). The region spanning 9–73 (RDAYIAKPHN…VPIRIPGKCH (65 aa)) is the LCN-type CS-alpha/beta domain. Disulfide bonds link cysteine 19/cysteine 72, cysteine 23/cysteine 45, cysteine 31/cysteine 55, and cysteine 35/cysteine 57. Position 74 (arginine 74) is a propeptide, removed by a carboxypeptidase.

This sequence belongs to the long (4 C-C) scorpion toxin superfamily. Sodium channel inhibitor family. Alpha subfamily. As to expression, expressed by the venom gland.

Its subcellular location is the secreted. Functionally, alpha toxins bind voltage-independently at site-3 of sodium channels (Nav) and inhibit the inactivation of the activated channels, thereby blocking neuronal transmission. The sequence is that of Sodium channel neurotoxin MeuNaTxalpha-11 from Mesobuthus eupeus (Lesser Asian scorpion).